The primary structure comprises 143 residues: Granulocyte-macrophage colony-stimulating factor (143 aa).

An N-terminal signal peptide occupies residues 1–17 (MWLQNLLLLGTVVCSFS). A glycan (O-linked (GalNAc...) threonine) is linked at threonine 27. Residues asparagine 44 and asparagine 54 are each glycosylated (N-linked (GlcNAc...) asparagine). Intrachain disulfides connect cysteine 70–cysteine 112 and cysteine 104–cysteine 137.

Belongs to the GM-CSF family. In terms of assembly, monomer. The signaling GM-CSF receptor complex is a dodecamer of two head-to-head hexamers of two alpha, two beta, and two ligand subunits.

The protein resides in the secreted. Cytokine that stimulates the growth and differentiation of hematopoietic precursor cells from various lineages, including granulocytes, macrophages, eosinophils and erythrocytes. In Bos taurus (Bovine), this protein is Granulocyte-macrophage colony-stimulating factor (CSF2).